Consider the following 227-residue polypeptide: Phosphoribosylformylglycinamidine synthase subunit PurQ (227 aa).

Positions 3 to 227 (SSVITFPGSN…FFQNLINNLK (225 aa)) constitute a Glutamine amidotransferase type-1 domain. Residue C85 is the Nucleophile of the active site. Residues H201 and E203 contribute to the active site.

As to quaternary structure, part of the FGAM synthase complex composed of 1 PurL, 1 PurQ and 2 PurS subunits.

It localises to the cytoplasm. The catalysed reaction is N(2)-formyl-N(1)-(5-phospho-beta-D-ribosyl)glycinamide + L-glutamine + ATP + H2O = 2-formamido-N(1)-(5-O-phospho-beta-D-ribosyl)acetamidine + L-glutamate + ADP + phosphate + H(+). It catalyses the reaction L-glutamine + H2O = L-glutamate + NH4(+). It functions in the pathway purine metabolism; IMP biosynthesis via de novo pathway; 5-amino-1-(5-phospho-D-ribosyl)imidazole from N(2)-formyl-N(1)-(5-phospho-D-ribosyl)glycinamide: step 1/2. Its function is as follows. Part of the phosphoribosylformylglycinamidine synthase complex involved in the purines biosynthetic pathway. Catalyzes the ATP-dependent conversion of formylglycinamide ribonucleotide (FGAR) and glutamine to yield formylglycinamidine ribonucleotide (FGAM) and glutamate. The FGAM synthase complex is composed of three subunits. PurQ produces an ammonia molecule by converting glutamine to glutamate. PurL transfers the ammonia molecule to FGAR to form FGAM in an ATP-dependent manner. PurS interacts with PurQ and PurL and is thought to assist in the transfer of the ammonia molecule from PurQ to PurL. This is Phosphoribosylformylglycinamidine synthase subunit PurQ from Pelagibacter ubique (strain HTCC1062).